Here is a 234-residue protein sequence, read N- to C-terminus: 7-cyano-7-deazaguanine synthase (234 aa).

Residue 8-18 coordinates ATP; sequence FSGGQDSTTCA. 4 residues coordinate Zn(2+): Cys194, Cys202, Cys205, and Cys208.

Belongs to the QueC family. Zn(2+) serves as cofactor.

It catalyses the reaction 7-carboxy-7-deazaguanine + NH4(+) + ATP = 7-cyano-7-deazaguanine + ADP + phosphate + H2O + H(+). It functions in the pathway purine metabolism; 7-cyano-7-deazaguanine biosynthesis. Its function is as follows. Catalyzes the ATP-dependent conversion of 7-carboxy-7-deazaguanine (CDG) to 7-cyano-7-deazaguanine (preQ(0)). This Gloeobacter violaceus (strain ATCC 29082 / PCC 7421) protein is 7-cyano-7-deazaguanine synthase.